We begin with the raw amino-acid sequence, 235 residues long: Ubiquinone biosynthesis O-methyltransferase (235 aa).

The S-adenosyl-L-methionine site is built by Arg-39, Gly-59, Asp-80, and Met-124.

Belongs to the methyltransferase superfamily. UbiG/COQ3 family.

The enzyme catalyses a 3-demethylubiquinol + S-adenosyl-L-methionine = a ubiquinol + S-adenosyl-L-homocysteine + H(+). The catalysed reaction is a 3-(all-trans-polyprenyl)benzene-1,2-diol + S-adenosyl-L-methionine = a 2-methoxy-6-(all-trans-polyprenyl)phenol + S-adenosyl-L-homocysteine + H(+). It functions in the pathway cofactor biosynthesis; ubiquinone biosynthesis. Its function is as follows. O-methyltransferase that catalyzes the 2 O-methylation steps in the ubiquinone biosynthetic pathway. In Vibrio vulnificus (strain CMCP6), this protein is Ubiquinone biosynthesis O-methyltransferase.